Consider the following 226-residue polypeptide: Enolase-phosphatase E1 (226 aa).

Belongs to the HAD-like hydrolase superfamily. MasA/MtnC family. In terms of assembly, monomer. Requires Mg(2+) as cofactor.

It carries out the reaction 5-methylsulfanyl-2,3-dioxopentyl phosphate + H2O = 1,2-dihydroxy-5-(methylsulfanyl)pent-1-en-3-one + phosphate. The protein operates within amino-acid biosynthesis; L-methionine biosynthesis via salvage pathway; L-methionine from S-methyl-5-thio-alpha-D-ribose 1-phosphate: step 3/6. It functions in the pathway amino-acid biosynthesis; L-methionine biosynthesis via salvage pathway; L-methionine from S-methyl-5-thio-alpha-D-ribose 1-phosphate: step 4/6. Its function is as follows. Bifunctional enzyme that catalyzes the enolization of 2,3-diketo-5-methylthiopentyl-1-phosphate (DK-MTP-1-P) into the intermediate 2-hydroxy-3-keto-5-methylthiopentenyl-1-phosphate (HK-MTPenyl-1-P), which is then dephosphorylated to form the acireductone 1,2-dihydroxy-3-keto-5-methylthiopentene (DHK-MTPene). This is Enolase-phosphatase E1 from Shewanella oneidensis (strain ATCC 700550 / JCM 31522 / CIP 106686 / LMG 19005 / NCIMB 14063 / MR-1).